Consider the following 196-residue polypeptide: uncharacterized protein (196 aa).

Positions 1–10 (MPGMVPPHVP) are enriched in pro residues. Disordered stretches follow at residues 1–118 (MPGM…EGSG) and 176–196 (TEQA…SAPG). Residues 25-45 (PVAPQVPSPGGAPGQGPYPYS) are compositionally biased toward low complexity. A compositionally biased stretch (polar residues) spans 54-69 (LDTSGKNLTEQNSYSN).

This is an uncharacterized protein from Homo sapiens (Human).